Reading from the N-terminus, the 201-residue chain is Potassium-transporting ATPase KdpC subunit (201 aa).

The chain crosses the membrane as a helical span at residues 12 to 34; sequence LLALTMITGLAYPLAVTGLATVL. The interval 69-102 is disordered; sequence RPSATVAPDPADSSKTVSAPYNAANSGGSNLGPT. Polar residues predominate over residues 81-101; the sequence is SSKTVSAPYNAANSGGSNLGP.

This sequence belongs to the KdpC family. In terms of assembly, the system is composed of three essential subunits: KdpA, KdpB and KdpC.

The protein resides in the cell inner membrane. Its function is as follows. Part of the high-affinity ATP-driven potassium transport (or Kdp) system, which catalyzes the hydrolysis of ATP coupled with the electrogenic transport of potassium into the cytoplasm. This subunit acts as a catalytic chaperone that increases the ATP-binding affinity of the ATP-hydrolyzing subunit KdpB by the formation of a transient KdpB/KdpC/ATP ternary complex. This is Potassium-transporting ATPase KdpC subunit from Rhodopseudomonas palustris (strain TIE-1).